Consider the following 443-residue polypeptide: Tubulin beta chain (443 aa).

Residues Gln11, Glu69, Ser138, Gly142, Thr143, Gly144, Asn204, and Asn226 each coordinate GTP. Residue Glu69 coordinates Mg(2+). The segment at 424–443 (QYQDATAEEEGEFEEEEGEN) is disordered. The span at 429–443 (TAEEEGEFEEEEGEN) shows a compositional bias: acidic residues.

It belongs to the tubulin family. Dimer of alpha and beta chains. A typical microtubule is a hollow water-filled tube with an outer diameter of 25 nm and an inner diameter of 15 nM. Alpha-beta heterodimers associate head-to-tail to form protofilaments running lengthwise along the microtubule wall with the beta-tubulin subunit facing the microtubule plus end conferring a structural polarity. Microtubules usually have 13 protofilaments but different protofilament numbers can be found in some organisms and specialized cells. The cofactor is Mg(2+). In terms of processing, some glutamate residues at the C-terminus are either polyglutamylated or polyglycylated. These 2 modifications occur exclusively on glutamate residues and result in either polyglutamate or polyglycine chains on the gamma-carboxyl group. Both modifications can coexist on the same protein on adjacent residues, and lowering polyglycylation levels increases polyglutamylation, and reciprocally. The precise function of such modifications is still unclear but they regulate the assembly and dynamics of axonemal microtubules.

The protein localises to the cytoplasm. The protein resides in the cytoskeleton. Its function is as follows. Tubulin is the major constituent of microtubules, a cylinder consisting of laterally associated linear protofilaments composed of alpha- and beta-tubulin heterodimers. Microtubules grow by the addition of GTP-tubulin dimers to the microtubule end, where a stabilizing cap forms. Below the cap, tubulin dimers are in GDP-bound state, owing to GTPase activity of alpha-tubulin. This is Tubulin beta chain (BTU1) from Tetrahymena thermophila.